The following is a 171-amino-acid chain: Glutamyl-tRNA(Gln) amidotransferase subunit F, mitochondrial (171 aa).

Belongs to the GatF family. As to quaternary structure, subunit of the heterotrimeric GatFAB amidotransferase (AdT) complex, composed of A, B and F subunits.

Its subcellular location is the mitochondrion inner membrane. It carries out the reaction L-glutamyl-tRNA(Gln) + L-glutamine + ATP + H2O = L-glutaminyl-tRNA(Gln) + L-glutamate + ADP + phosphate + H(+). In terms of biological role, allows the formation of correctly charged Gln-tRNA(Gln) through the transamidation of misacylated Glu-tRNA(Gln) in the mitochondria. The reaction takes place in the presence of glutamine and ATP through an activated gamma-phospho-Glu-tRNA(Gln). Required for proper protein synthesis within the mitochondrion. In Zygosaccharomyces rouxii (strain ATCC 2623 / CBS 732 / NBRC 1130 / NCYC 568 / NRRL Y-229), this protein is Glutamyl-tRNA(Gln) amidotransferase subunit F, mitochondrial.